Here is a 190-residue protein sequence, read N- to C-terminus: Peptidyl-tRNA hydrolase (190 aa).

Residue tyrosine 14 coordinates tRNA. Residue histidine 19 is the Proton acceptor of the active site. TRNA is bound by residues tyrosine 64, asparagine 66, and asparagine 112.

It belongs to the PTH family. As to quaternary structure, monomer.

Its subcellular location is the cytoplasm. It carries out the reaction an N-acyl-L-alpha-aminoacyl-tRNA + H2O = an N-acyl-L-amino acid + a tRNA + H(+). Hydrolyzes ribosome-free peptidyl-tRNAs (with 1 or more amino acids incorporated), which drop off the ribosome during protein synthesis, or as a result of ribosome stalling. In terms of biological role, catalyzes the release of premature peptidyl moieties from peptidyl-tRNA molecules trapped in stalled 50S ribosomal subunits, and thus maintains levels of free tRNAs and 50S ribosomes. The polypeptide is Peptidyl-tRNA hydrolase (Chlorobium limicola (strain DSM 245 / NBRC 103803 / 6330)).